A 361-amino-acid chain; its full sequence is Phospho-N-acetylmuramoyl-pentapeptide-transferase (361 aa).

Helical transmembrane passes span 26–46 (SILAALTALFLSLWIGPVLIQ), 73–93 (TMGGSLILMTVTLSVLLWGDL), 98–118 (VWLVLVVMLAFGAIGWYDDWI), 139–159 (IFGLAAGLFLYFTADVPAAVT), 168–188 (IALPLTSISFVAITYFWIVGF), 200–220 (GLAIMPTVLVACALGVFAYAS), 237–257 (AGDLIIICAAIAGAGLGFLWF), 264–284 (VFMGDIGALALGAVLGTIAVI), 289–309 (LVLVVMGGVFVIETLSVIIQV), and 339–359 (VIVRFWIISVVLVLVGLATLK).

This sequence belongs to the glycosyltransferase 4 family. MraY subfamily. Requires Mg(2+) as cofactor.

It localises to the cell inner membrane. It catalyses the reaction UDP-N-acetyl-alpha-D-muramoyl-L-alanyl-gamma-D-glutamyl-meso-2,6-diaminopimeloyl-D-alanyl-D-alanine + di-trans,octa-cis-undecaprenyl phosphate = di-trans,octa-cis-undecaprenyl diphospho-N-acetyl-alpha-D-muramoyl-L-alanyl-D-glutamyl-meso-2,6-diaminopimeloyl-D-alanyl-D-alanine + UMP. Its pathway is cell wall biogenesis; peptidoglycan biosynthesis. In terms of biological role, catalyzes the initial step of the lipid cycle reactions in the biosynthesis of the cell wall peptidoglycan: transfers peptidoglycan precursor phospho-MurNAc-pentapeptide from UDP-MurNAc-pentapeptide onto the lipid carrier undecaprenyl phosphate, yielding undecaprenyl-pyrophosphoryl-MurNAc-pentapeptide, known as lipid I. The sequence is that of Phospho-N-acetylmuramoyl-pentapeptide-transferase from Xylella fastidiosa (strain M12).